A 341-amino-acid polypeptide reads, in one-letter code: uncharacterized protein (341 aa).

Positions 125–146 are disordered; that stretch reads DTVKHNGSGPRPEQASSHVHYS.

It belongs to the cycloisomerase 2 family.

This is an uncharacterized protein from Lactococcus lactis subsp. cremoris (strain MG1363).